Reading from the N-terminus, the 486-residue chain is ATP synthase subunit beta (486 aa).

164 to 171 (GGAGVGKT) is a binding site for ATP.

It belongs to the ATPase alpha/beta chains family. In terms of assembly, F-type ATPases have 2 components, CF(1) - the catalytic core - and CF(0) - the membrane proton channel. CF(1) has five subunits: alpha(3), beta(3), gamma(1), delta(1), epsilon(1). CF(0) has four main subunits: a(1), b(1), b'(1) and c(9-12).

The protein resides in the cellular thylakoid membrane. The enzyme catalyses ATP + H2O + 4 H(+)(in) = ADP + phosphate + 5 H(+)(out). In terms of biological role, produces ATP from ADP in the presence of a proton gradient across the membrane. The catalytic sites are hosted primarily by the beta subunits. This Prochlorococcus marinus (strain AS9601) protein is ATP synthase subunit beta.